The primary structure comprises 381 residues: Arginine biosynthesis bifunctional protein ArgJ (381 aa).

The substrate site is built by threonine 143, lysine 165, threonine 176, glutamate 255, asparagine 376, and threonine 381. Residue threonine 176 is the Nucleophile of the active site.

It belongs to the ArgJ family. As to quaternary structure, heterotetramer of two alpha and two beta chains.

The protein resides in the cytoplasm. The enzyme catalyses N(2)-acetyl-L-ornithine + L-glutamate = N-acetyl-L-glutamate + L-ornithine. The catalysed reaction is L-glutamate + acetyl-CoA = N-acetyl-L-glutamate + CoA + H(+). Its pathway is amino-acid biosynthesis; L-arginine biosynthesis; L-ornithine and N-acetyl-L-glutamate from L-glutamate and N(2)-acetyl-L-ornithine (cyclic): step 1/1. The protein operates within amino-acid biosynthesis; L-arginine biosynthesis; N(2)-acetyl-L-ornithine from L-glutamate: step 1/4. Catalyzes two activities which are involved in the cyclic version of arginine biosynthesis: the synthesis of N-acetylglutamate from glutamate and acetyl-CoA as the acetyl donor, and of ornithine by transacetylation between N(2)-acetylornithine and glutamate. This Thermus thermophilus (strain ATCC BAA-163 / DSM 7039 / HB27) protein is Arginine biosynthesis bifunctional protein ArgJ.